Consider the following 107-residue polypeptide: uncharacterized protein (107 aa).

It belongs to the HesB/IscA family.

This is an uncharacterized protein from Azotobacter vinelandii.